Reading from the N-terminus, the 89-residue chain is Small ribosomal subunit protein uS15 (89 aa).

It belongs to the universal ribosomal protein uS15 family. Part of the 30S ribosomal subunit. Forms a bridge to the 50S subunit in the 70S ribosome, contacting the 23S rRNA.

One of the primary rRNA binding proteins, it binds directly to 16S rRNA where it helps nucleate assembly of the platform of the 30S subunit by binding and bridging several RNA helices of the 16S rRNA. Functionally, forms an intersubunit bridge (bridge B4) with the 23S rRNA of the 50S subunit in the ribosome. This Rhizobium etli (strain CIAT 652) protein is Small ribosomal subunit protein uS15.